Here is a 284-residue protein sequence, read N- to C-terminus: MLIIETLPLLRQQIRRWRQEGKRIALVPTMGNLHEGHMTLVDEAKTRADVVVVTIFVNPLQFERPDDLAHYPRTLQEDCEKLTRHGADLVFAPAAADIYPAGLEKQTYVDVPALSTILEGASRPGHFRGVSTIVSKLFNLIQPDVACFGEKDYQQLALIRKMVADMGYDINIVGVPTVRAKDGLALSSRNGYLTEEERQIAPQLSKIMWALAEKMALGERQIDALLEDAAAQLLRAGFTPDELFIRDAETLQPLTVDSQQAVILMAAWLGKARLIDNQLVDLRH.

30–37 (MGNLHEGH) is an ATP binding site. Catalysis depends on His37, which acts as the Proton donor. Gln61 lines the (R)-pantoate pocket. Gln61 is a binding site for beta-alanine. 149–152 (GEKD) contributes to the ATP binding site. Gln155 contacts (R)-pantoate. Residues Val178 and 186–189 (LSSR) each bind ATP.

It belongs to the pantothenate synthetase family. As to quaternary structure, homodimer.

It localises to the cytoplasm. It carries out the reaction (R)-pantoate + beta-alanine + ATP = (R)-pantothenate + AMP + diphosphate + H(+). Its pathway is cofactor biosynthesis; (R)-pantothenate biosynthesis; (R)-pantothenate from (R)-pantoate and beta-alanine: step 1/1. Catalyzes the condensation of pantoate with beta-alanine in an ATP-dependent reaction via a pantoyl-adenylate intermediate. The polypeptide is Pantothenate synthetase (Yersinia pseudotuberculosis serotype O:1b (strain IP 31758)).